The sequence spans 252 residues: Phosphate import ATP-binding protein PstB (252 aa).

Positions 6–247 constitute an ABC transporter domain; it reads ITINNLNFYY…PRDKRTEDYI (242 aa). Residue 38–45 coordinates ATP; the sequence is GPSGCGKS.

It belongs to the ABC transporter superfamily. Phosphate importer (TC 3.A.1.7) family. In terms of assembly, the complex is composed of two ATP-binding proteins (PstB), two transmembrane proteins (PstC and PstA) and a solute-binding protein (PstS).

It localises to the cell membrane. It carries out the reaction phosphate(out) + ATP + H2O = ADP + 2 phosphate(in) + H(+). Its function is as follows. Part of the ABC transporter complex PstSACB involved in phosphate import. Responsible for energy coupling to the transport system. In Moorella thermoacetica (strain ATCC 39073 / JCM 9320), this protein is Phosphate import ATP-binding protein PstB.